A 1369-amino-acid chain; its full sequence is MSTGDSFETRFEKIDNLLRDPKSEVNSDCLLDGLDALVYDLDFPALRKNKNIDNFLSRYKDTINKIRDLRMKAEDYEVVKVIGRGAFGEVQLVRHKSTRKVYAMKLLSKFEMIKRSDSAFFWEERDIMAFANSPWVVQLFYAFQDDRYLYMVMEYMPGGDLVNLMSNYDVPEKWARFYTAEVVLALDAIHSMGFIHRDVKPDNMLLDKSGHLKLADFGTCMKMNKEGMVRCDTAVGTPDYISPEVLKSQGGDGYYGRECDWWSVGVFLYEMLVGDTPFYADSLVGTYSKIMNHKNSLTFPDDNDISKEAKNLICAFLTDREVRLGRNGVEEIKRHLFFKNDQWAWETLRDTVAPVVPDLSSDIDTSNFDDLEEDKGDEETFPIPKAFVGNQLPFVGFTYYSNRRYLPSANPSENRSSSNVDKNVQESLQKTIYKLEEQLHNEMQLKDEMEQKCRTSNIKLDKIMKELDEEGNQRRNLESAVSQIEKEKMLLQHRINEYQRKVEQENEKRRNVENEVSTLKDQLEDLRKASQSSQLANEKLTQLQKQLEEANDLLRTESDTAVRLRKSHTEMSKSVSQLESLNRELQERNRMLENSKSQADKDYYQLQAVLEAERRDRGHDSEMIGDLQARITSLQEEVKHLKHNLERVEGERKEAQDMLNHSEKEKNNLEIDLNYKLKSIQQRLEQEVNEHKVTKARLTDKHQSIEEAKSVAMCEMEKKLKEEREAREKAENRVVETEKQCSMLDVDLKQSQQKLEHLTENKERLEDAVKSLTLQLEQESNKRILLQSELKTQAFEADNLKGLEKQMKQEINTLLEAKRLLEFELAQLTKQYRGNEGQMRELQDQLEAEQYFSTLYKTQVKELKEEIEEKNRENLRKIQELQSEKETLSTQLDLAETKAESEQLARGILEEQYFELTQESKKAASRNRQEITDKDHTVSRLEEANNALTKDIELLRKENEELNERMRTAEEEYKLKKEEEISNLKAAFEKNISTERTLKTQAVNKLAEIMNRKDFKIDRKKANTQDLRKKEKENRKLQLELNQEREKFNQMVVKHQKELNDMQAQLVEECTHRNELQMQLASKESDIEQLRAKLLDLSDSTSVASFPSADETDGNLPVGSACIPYLFIFYSSSSRIEGWLSVPNRGNIKRYGWKKQYVVVSSKKMLFYNDEQDKEQSSPSMVLDIDKLFHVRPVTQGDVYRAETEEIPKIFQILYANEGECRKDIEVEPVQQGEKTNFQNHKGHEFIPTLYHFPANCEACAKPLWHVFKPPPALECRRCHVKSHRDHLDKKEDLIPPCKVSYDVTSARDMLLLACPQDEQKKWVTHLVKKIPKKAPSGFVRASPRTLSTRSTANQSFRKVVKNTSGKTS.

At Ser2 the chain carries N-acetylserine. The Protein kinase domain maps to 76–338; it reads YEVVKVIGRG…VEEIKRHLFF (263 aa). Residues 82-90 and Lys105 contribute to the ATP site; that span reads IGRGAFGEV. Asp198 (proton acceptor) is an active-site residue. One can recognise an AGC-kinase C-terminal domain in the interval 341–409; the sequence is DQWAWETLRD…YSNRRYLPSA (69 aa). Residues 368 to 727 form an interaction with FHOD1 region; sequence FDDLEEDKGD…KKLKEEREAR (360 aa). Positions 422–692 form a coiled coil; it reads KNVQESLQKT…RLEQEVNEHK (271 aa). The 78-residue stretch at 479–556 folds into the REM-1 domain; that stretch reads SAVSQIEKEK…LEEANDLLRT (78 aa). The interval 707-946 is SHROOM3 binding; the sequence is EAKSVAMCEM…TVSRLEEANN (240 aa). The 67-residue stretch at 949–1015 folds into the RhoBD domain; the sequence is TKDIELLRKE…LAEIMNRKDF (67 aa). Positions 998–1010 are RHOA binding; it reads LKTQAVNKLAEIM. Positions 1011–1102 form a coiled coil; that stretch reads NRKDFKIDRK…KLLDLSDSTS (92 aa). Residues Ser1105 and Ser1108 each carry the phosphoserine modification. The auto-inhibitory stretch occupies residues 1115–1369; the sequence is NLPVGSACIP…VVKNTSGKTS (255 aa). The PH domain maps to 1133–1332; it reads SSRIEGWLSV…WVTHLVKKIP (200 aa). Residues 1243–1298 form a Phorbol-ester/DAG-type zinc finger; that stretch reads GHEFIPTLYHFPANCEACAKPLWHVFKPPPALECRRCHVKSHRDHLDKKEDLIPPC. Ser1343 bears the Phosphoserine mark.

This sequence belongs to the protein kinase superfamily. AGC Ser/Thr protein kinase family. As to quaternary structure, homodimer. Interacts with GEM, MYLC2B, RHOE, LIMK1, LIMK2, TSG101, CHORDC1, DAPK3, PFN1, PTEN and JIP3. Interacts with FHOD1 in a Src-dependent manner. Interacts with ITGB1BP1 (via N-terminus and PTB domain). Interacts with RHOA (activated by GTP), RHOB, RHOC and PPP1R12A. Interacts with SHROOM3. Mg(2+) serves as cofactor. Autophosphorylated on serine and threonine residues. In terms of processing, cleaved by caspase-3 during apoptosis. This leads to constitutive activation of the kinase and membrane blebbing. Highly expressed in brain, spleen, lung, liver, skeletal muscle, kidney and testis.

It is found in the cytoplasm. The protein resides in the cytoskeleton. It localises to the microtubule organizing center. The protein localises to the centrosome. Its subcellular location is the centriole. It is found in the golgi apparatus membrane. The protein resides in the cell projection. It localises to the bleb. The protein localises to the cell membrane. Its subcellular location is the lamellipodium. It is found in the ruffle. It carries out the reaction L-seryl-[protein] + ATP = O-phospho-L-seryl-[protein] + ADP + H(+). The catalysed reaction is L-threonyl-[protein] + ATP = O-phospho-L-threonyl-[protein] + ADP + H(+). Activated by RHOA binding. Inhibited by Y-27632. Protein kinase which is a key regulator of the actin cytoskeleton and cell polarity. Involved in regulation of smooth muscle contraction, actin cytoskeleton organization, stress fiber and focal adhesion formation, neurite retraction, cell adhesion and motility via phosphorylation of DAPK3, GFAP, LIMK1, LIMK2, MYL9/MLC2, TPPP, PFN1 and PPP1R12A. Phosphorylates FHOD1 and acts synergistically with it to promote SRC-dependent non-apoptotic plasma membrane blebbing. Phosphorylates JIP3 and regulates the recruitment of JNK to JIP3 upon UVB-induced stress. Acts as a suppressor of inflammatory cell migration by regulating PTEN phosphorylation and stability. Acts as a negative regulator of VEGF-induced angiogenic endothelial cell activation. Required for centrosome positioning and centrosome-dependent exit from mitosis. Plays a role in terminal erythroid differentiation. Inhibits podocyte motility via regulation of actin cytoskeletal dynamics and phosphorylation of CFL1. Promotes keratinocyte terminal differentiation. Involved in osteoblast compaction through the fibronectin fibrillogenesis cell-mediated matrix assembly process, essential for osteoblast mineralization. May regulate closure of the eyelids and ventral body wall by inducing the assembly of actomyosin bundles. The protein is Rho-associated protein kinase 1 (Rock1) of Rattus norvegicus (Rat).